Here is a 360-residue protein sequence, read N- to C-terminus: Popeye domain-containing protein 1 (360 aa).

The Extracellular segment spans residues 1-48 (MNYTESSPLRESTAIGFTPELESIIPVPSNKTTCENWREIHHLVFHVA). 2 N-linked (GlcNAc...) asparagine glycosylation sites follow: asparagine 2 and asparagine 30. Residues 49 to 69 (NICFAVGLVIPTTLHLHMIFL) form a helical membrane-spanning segment. Residue arginine 70 is a topological domain, cytoplasmic. A helical transmembrane segment spans residues 71-91 (GMLTLGCTLYIVWATLYRCAL). A topological domain (extracellular) is located at residue aspartate 92. Residues 93-113 (IMIWNSVFLGVNILHLSYLLY) form a helical membrane-spanning segment. Residues 93-115 (IMIWNSVFLGVNILHLSYLLYKK) are required for interaction with CAV3. Residues 114–360 (KKRPVKIEKE…PNTLKVHQLP (247 aa)) are Cytoplasmic-facing. A required for interaction with KCNK2 region spans residues 136–186 (RVPPDLFRRLTGQFCMIQTLKKGQTYAAEDKTSVDDRLSILLKGKMKVSYR). 2 positions are modified to phosphoserine: serine 295 and serine 318. The disordered stretch occupies residues 317 to 360 (SSLHVSSPHQRASAKMKPIEEGAEDDDDVFEPASPNTLKVHQLP). The span at 337-346 (EGAEDDDDVF) shows a compositional bias: acidic residues. The span at 350–360 (SPNTLKVHQLP) shows a compositional bias: polar residues.

The protein belongs to the popeye family. In terms of assembly, homodimer. Homodimerization requires the C-terminus cytoplasmic region. Interacts (via the C-terminus cytoplasmic tail) with TJP1. Interacts (via the C-terminus cytoplasmic tail) with ARHGEF25/GEFT (via the DH domain). Interacts (via the C-terminus cytoplasmic tail) with VAMP3. Interacts with KCNK2; the interaction enhances KCNK2 surface expression and is inhibited by cAMP. Interacts with CAV3. Expressed in epithelial cells (at protein level). Expressed in fetal and adult heart and skeletal muscle.

The protein localises to the lateral cell membrane. Its subcellular location is the cell junction. The protein resides in the tight junction. It localises to the membrane. It is found in the cell membrane. The protein localises to the sarcolemma. Its subcellular location is the caveola. Its function is as follows. Cell adhesion molecule involved in the establishment and/or maintenance of cell integrity. Involved in the formation and regulation of the tight junction (TJ) paracellular permeability barrier in epithelial cells. Plays a role in VAMP3-mediated vesicular transport and recycling of different receptor molecules through its interaction with VAMP3. Plays a role in the regulation of cell shape and movement by modulating the Rho-family GTPase activity through its interaction with ARHGEF25/GEFT. Induces primordial adhesive contact and aggregation of epithelial cells in a Ca(2+)-independent manner. Also involved in striated muscle regeneration and repair and in the regulation of cell spreading. Important for the maintenance of cardiac function. Plays a regulatory function in heart rate dynamics mediated, at least in part, through cAMP-binding and, probably, by increasing cell surface expression of the potassium channel KCNK2 and enhancing current density. Is also a caveolae-associated protein important for the preservation of caveolae structural and functional integrity as well as for heart protection against ischemia injury. This Homo sapiens (Human) protein is Popeye domain-containing protein 1.